We begin with the raw amino-acid sequence, 98 residues long: Co-chaperonin GroES (98 aa).

The protein belongs to the GroES chaperonin family. Heptamer of 7 subunits arranged in a ring. Interacts with the chaperonin GroEL.

It is found in the cytoplasm. Functionally, together with the chaperonin GroEL, plays an essential role in assisting protein folding. The GroEL-GroES system forms a nano-cage that allows encapsulation of the non-native substrate proteins and provides a physical environment optimized to promote and accelerate protein folding. GroES binds to the apical surface of the GroEL ring, thereby capping the opening of the GroEL channel. The protein is Co-chaperonin GroES of Rhizobium leguminosarum bv. trifolii (strain WSM2304).